A 20-amino-acid chain; its full sequence is Thylakoid lumenal 22 kDa protein (20 aa).

It localises to the plastid. The protein resides in the chloroplast thylakoid lumen. The protein is Thylakoid lumenal 22 kDa protein of Spinacia oleracea (Spinach).